The sequence spans 324 residues: Acetyl-coenzyme A carboxylase carboxyl transferase subunit alpha (324 aa).

In terms of domain architecture, CoA carboxyltransferase C-terminal spans I37–Q291.

It belongs to the AccA family. Acetyl-CoA carboxylase is a heterohexamer composed of biotin carboxyl carrier protein (AccB), biotin carboxylase (AccC) and two subunits each of ACCase subunit alpha (AccA) and ACCase subunit beta (AccD).

It is found in the cytoplasm. The catalysed reaction is N(6)-carboxybiotinyl-L-lysyl-[protein] + acetyl-CoA = N(6)-biotinyl-L-lysyl-[protein] + malonyl-CoA. It participates in lipid metabolism; malonyl-CoA biosynthesis; malonyl-CoA from acetyl-CoA: step 1/1. Component of the acetyl coenzyme A carboxylase (ACC) complex. First, biotin carboxylase catalyzes the carboxylation of biotin on its carrier protein (BCCP) and then the CO(2) group is transferred by the carboxyltransferase to acetyl-CoA to form malonyl-CoA. This Bacillus cereus (strain ATCC 14579 / DSM 31 / CCUG 7414 / JCM 2152 / NBRC 15305 / NCIMB 9373 / NCTC 2599 / NRRL B-3711) protein is Acetyl-coenzyme A carboxylase carboxyl transferase subunit alpha.